Reading from the N-terminus, the 271-residue chain is uncharacterized protein (271 aa).

One can recognise an AB hydrolase-1 domain in the interval 24–124; that stretch reads PIILLVHGGG…QVHVMIPHEP (101 aa).

This sequence belongs to the AB hydrolase superfamily.

This is an uncharacterized protein from Bacillus subtilis (strain 168).